We begin with the raw amino-acid sequence, 147 residues long: Hemoglobin subunit gamma (147 aa).

Residues 3–147 (NFTAEDKAAI…VASALGSRYH (145 aa)) enclose the Globin domain. Residues histidine 64 and histidine 93 each contribute to the heme b site.

It belongs to the globin family. Heterotetramer of two alpha chains and two gamma chains in fetal hemoglobin (Hb F). Red blood cells.

In terms of biological role, gamma chains make up the fetal hemoglobin F, in combination with alpha chains. In Aotus azarae (Azara's night monkey), this protein is Hemoglobin subunit gamma (HBG).